Reading from the N-terminus, the 512-residue chain is Transcriptional activator CadC (512 aa).

Over 1–154 (MQQPVVRVGE…PPEQSPVKSK (154 aa)) the chain is Cytoplasmic. Positions 3–102 (QPVVRVGEWL…VPKRGYKLMV (100 aa)) form a DNA-binding region, ompR/PhoB-type. A helical transmembrane segment spans residues 155–180 (RFTTFWVWFFFLLSLGICVALVAFSS). Residues 181-512 (LDTRLPMSKS…PYLDKFLASE (332 aa)) are Periplasmic-facing. A disulfide bond links cysteine 208 and cysteine 272.

In terms of assembly, homodimer. Dimerization of the periplasmic domain is required for activation of the cadBA operon. Interacts strongly with the lysine permease LysP in the absence of lysine or at low lysine concentrations. Interaction is markedly attenuated under increasing lysine levels. Concomitant pH-dependent protonation of periplasmic amino acids in both proteins dissolves their electrostatic connections resulting in further destabilization of the CadC/LysP interaction. In terms of processing, contains a functionally important disulfide bond, which may provide structural support for the pH-dependent activation via a switch of the sensor between the inactive and active state.

It is found in the cell inner membrane. With respect to regulation, activation of CadC requires two stimuli, lysine and low pH. CadC shows an extremely low affinity for lysine, and it senses the extracellular lysine not directly but indirectly via interaction with the lysine permease LysP. At a low external lysine concentration, CadC is inactivated by an interaction with LysP. When lysine is abundantly available, the interaction between LysP and CadC is released, and CadC becomes susceptible to activation by low pH. Acidification of the external milieu is sensed by protonation of a patch of acidic amino acids within the periplasmic domain and associated to conformational and/or oligomerization effects. The pH-dependent regulation may be due to the presence/absence of a disulfide bond within the periplasmic domain. At pH 7.6, a disulfide bond is found in the inactive state of CadC. At pH 5.8, disulfide bond formation is prevented, which transforms CadC into a semi-active state with respect to both the pH and the lysine stimuli. Activity is also feedback inhibited by cadaverine. Cadaverine binds first to the central cavity, which putatively triggers intramolecular rearrangements to expose the binding sites for cadaverine at the dimer interface, which inactivates CadC and consequently shuts off transcription of the cadBA operon. Regulates the lysine- and pH-dependent expression of the lysine decarboxylase CadA and the cadaverine-lysine antiporter CadB. At low external pH, and in the presence of external lysine, CadC activates transcription of the cadBA operon by binding directly to two sites, Cad1 and Cad2, within the cadBA promoter region (Pcad). Preferentially binds to AT-rich regions within the Cad1 promoter. This Escherichia coli (strain K12) protein is Transcriptional activator CadC (cadC).